The following is a 315-amino-acid chain: Porphobilinogen deaminase (315 aa).

The residue at position 245 (C245) is an S-(dipyrrolylmethanemethyl)cysteine.

It belongs to the HMBS family. Monomer. Requires dipyrromethane as cofactor.

It catalyses the reaction 4 porphobilinogen + H2O = hydroxymethylbilane + 4 NH4(+). It participates in porphyrin-containing compound metabolism; protoporphyrin-IX biosynthesis; coproporphyrinogen-III from 5-aminolevulinate: step 2/4. It functions in the pathway porphyrin-containing compound metabolism; chlorophyll biosynthesis. Tetrapolymerization of the monopyrrole PBG into the hydroxymethylbilane pre-uroporphyrinogen in several discrete steps. The sequence is that of Porphobilinogen deaminase from Prochlorococcus marinus (strain NATL1A).